The following is a 172-amino-acid chain: Small ribosomal subunit protein uS5 (172 aa).

The S5 DRBM domain occupies 13 to 76 (LIEKMVAVNR…DQARRSMIKV (64 aa)).

This sequence belongs to the universal ribosomal protein uS5 family. Part of the 30S ribosomal subunit. Contacts proteins S4 and S8.

Its function is as follows. With S4 and S12 plays an important role in translational accuracy. Located at the back of the 30S subunit body where it stabilizes the conformation of the head with respect to the body. The chain is Small ribosomal subunit protein uS5 from Neisseria gonorrhoeae (strain ATCC 700825 / FA 1090).